We begin with the raw amino-acid sequence, 390 residues long: tRNA-specific 2-thiouridylase MnmA (390 aa).

Residues 20 to 27 (AMSGGVDS) and L46 contribute to the ATP site. C114 acts as the Nucleophile in catalysis. C114 and C211 are joined by a disulfide. ATP is bound at residue G138. Positions 161 to 163 (RDQ) are interaction with tRNA. C211 serves as the catalytic Cysteine persulfide intermediate.

The protein belongs to the MnmA/TRMU family.

It is found in the cytoplasm. It catalyses the reaction S-sulfanyl-L-cysteinyl-[protein] + uridine(34) in tRNA + AH2 + ATP = 2-thiouridine(34) in tRNA + L-cysteinyl-[protein] + A + AMP + diphosphate + H(+). In terms of biological role, catalyzes the 2-thiolation of uridine at the wobble position (U34) of tRNA, leading to the formation of s(2)U34. This chain is tRNA-specific 2-thiouridylase MnmA, found in Azorhizobium caulinodans (strain ATCC 43989 / DSM 5975 / JCM 20966 / LMG 6465 / NBRC 14845 / NCIMB 13405 / ORS 571).